The sequence spans 238 residues: Zinc import ATP-binding protein ZnuC (238 aa).

Residues 5–220 (IQLNNISVNF…SEFIAIFGNI (216 aa)) enclose the ABC transporter domain. Position 37–44 (37–44 (GPNGAGKS)) interacts with ATP.

It belongs to the ABC transporter superfamily. Zinc importer (TC 3.A.1.15.5) family. The complex is composed of two ATP-binding proteins (ZnuC), two transmembrane proteins (ZnuB) and a solute-binding protein (ZnuA).

Its subcellular location is the cell membrane. The catalysed reaction is Zn(2+)(out) + ATP(in) + H2O(in) = Zn(2+)(in) + ADP(in) + phosphate(in) + H(+)(in). Part of the ABC transporter complex ZnuABC involved in zinc import. Responsible for energy coupling to the transport system. The polypeptide is Zinc import ATP-binding protein ZnuC (Buchnera aphidicola subsp. Baizongia pistaciae (strain Bp)).